The sequence spans 345 residues: Anthranilate phosphoribosyltransferase (345 aa).

Residues glycine 84, 87 to 88 (GD), threonine 92, 94 to 97 (NIST), 112 to 120 (KHGNRSVSS), and serine 124 contribute to the 5-phospho-alpha-D-ribose 1-diphosphate site. Glycine 84 lines the anthranilate pocket. Serine 96 contributes to the Mg(2+) binding site. An anthranilate-binding site is contributed by asparagine 115. An anthranilate-binding site is contributed by arginine 170. Residues aspartate 229 and glutamate 230 each coordinate Mg(2+).

This sequence belongs to the anthranilate phosphoribosyltransferase family. As to quaternary structure, homodimer. It depends on Mg(2+) as a cofactor.

It catalyses the reaction N-(5-phospho-beta-D-ribosyl)anthranilate + diphosphate = 5-phospho-alpha-D-ribose 1-diphosphate + anthranilate. Its pathway is amino-acid biosynthesis; L-tryptophan biosynthesis; L-tryptophan from chorismate: step 2/5. In terms of biological role, catalyzes the transfer of the phosphoribosyl group of 5-phosphorylribose-1-pyrophosphate (PRPP) to anthranilate to yield N-(5'-phosphoribosyl)-anthranilate (PRA). The chain is Anthranilate phosphoribosyltransferase from Xanthomonas campestris pv. campestris (strain 8004).